Reading from the N-terminus, the 465-residue chain is GDNF family receptor alpha-2 (465 aa).

The N-terminal stretch at 1–21 (MILANAFCIVLFVDETLRSLA) is a signal peptide. Cystine bridges form between Cys40–Cys93, Cys47–Cys53, Cys63–Cys78, Cys95–Cys105, Cys159–Cys220, Cys166–Cys172, Cys183–Cys198, Cys193–Cys239, Cys222–Cys227, Cys249–Cys321, Cys256–Cys262, Cys273–Cys291, Cys283–Cys345, and Cys323–Cys333. Residues Asn355, Asn387, and Asn412 are each glycosylated (N-linked (GlcNAc...) asparagine). Ser445 carries the GPI-anchor amidated serine lipid modification. A propeptide spans 446 to 465 (RHRAARILPAVPIVLLKLLL) (removed in mature form).

It belongs to the GDNFR family. In terms of assembly, interacts with NRTN ligand and RET: forms a 2:2:2 ternary complex composed of NRTN ligand, GFRA2 and RET receptor.

It localises to the cell membrane. Receptor for neurturin (NRTN), a growth factor that supports the survival of sympathetic neurons. NRTN-binding leads to autophosphorylation and activation of the RET receptor. This is GDNF family receptor alpha-2 (GFRA2) from Gallus gallus (Chicken).